The primary structure comprises 698 residues: Transferrin-binding protein B (698 aa).

Residues 1 to 20 (MNNPLVNQAAMVLPVFLLSA) form the signal peptide. Cys-21 carries the N-palmitoyl cysteine lipid modification. Cys-21 is lipidated: S-diacylglycerol cysteine. Disordered stretches follow at residues 33 to 58 (VDTE…QKDQ), 83 to 102 (IKLS…KNPS), 294 to 324 (FSGK…SLSG), 349 to 383 (GSAK…SENS), 428 to 479 (ESGK…GDAN), and 669 to 698 (TKNA…KPVQ). Residues 46-56 (DVSSEKPQAQK) show a composition bias toward polar residues. Basic and acidic residues predominate over residues 299–315 (EATDKPKNDGETKEHPF). A compositionally biased stretch (low complexity) spans 369-383 (AAASNGAAGTSSENS). A compositionally biased stretch (polar residues) spans 460-476 (QAGTAENGNPAASNTAG). Residues 671–686 (NATDASGNGNSASSAT) show a composition bias toward low complexity.

It belongs to the TbpB family. Binds only human holo-transferrin (TF), via the TF C-terminus. Forms a large complex with TbpA and TF. Interacts via its C-terminal domain with Slam1.

The protein localises to the cell outer membrane. The protein resides in the cell surface. Neisseria acquires iron by extracting it from serum transferrin (TF) in its human host. Acts as a TF receptor and is required for TF utilization. Involved in the initial capture of TF. Helps select only those TF molecules that can be used as an iron source and concentrates them on the cell surface, maintaining the iron-loaded status of the TF C-terminal lobe until its delivery to TbpA. This chain is Transferrin-binding protein B, found in Neisseria meningitidis serogroup A / serotype 4A (strain DSM 15465 / Z2491).